The sequence spans 121 residues: Ribosome-binding factor A (121 aa).

The protein belongs to the RbfA family. Monomer. Binds 30S ribosomal subunits, but not 50S ribosomal subunits or 70S ribosomes.

It is found in the cytoplasm. In terms of biological role, one of several proteins that assist in the late maturation steps of the functional core of the 30S ribosomal subunit. Associates with free 30S ribosomal subunits (but not with 30S subunits that are part of 70S ribosomes or polysomes). Required for efficient processing of 16S rRNA. May interact with the 5'-terminal helix region of 16S rRNA. The sequence is that of Ribosome-binding factor A from Clostridium tetani (strain Massachusetts / E88).